The chain runs to 28 residues: Cruzioseptin-3 (28 aa).

Glutamine 25 carries the glutamine amide modification. The propeptide occupies 27-28 (EQ).

Expressed by the skin glands.

Its subcellular location is the secreted. In terms of biological role, has antimicrobial activity against Gram-negative bacterium E.coli (MIC=13.32 uM), against Gram-positive bacterium S.aureus (MIC=13.32 uM) and against fungus C.albicans (MIC=13.32 uM). At higher concentrations also has a bactericidal and fungicidal effect. Has hemagglutinating activity against horse erythrocytes. The sequence is that of Cruzioseptin-3 from Cruziohyla calcarifer (Splendid leaf frog).